Consider the following 68-residue polypeptide: Inhibitor of trypsin and hageman factor (68 aa).

S1 is modified (N-acetylserine). A disulfide bond links C3 and C48.

The protein belongs to the protease inhibitor I13 (potato type I serine protease inhibitor) family.

Specifically inhibits both trypsin and activated Hageman factor. The chain is Inhibitor of trypsin and hageman factor from Cucurbita maxima (Pumpkin).